We begin with the raw amino-acid sequence, 89 residues long: Peroxidase (89 aa).

Residue histidine 52 coordinates heme. Ca(2+) is bound by residues threonine 53 and aspartate 68.

Heme b is required as a cofactor. The cofactor is Ca(2+).

Its subcellular location is the secreted. The enzyme catalyses 2 a phenolic donor + H2O2 = 2 a phenolic radical donor + 2 H2O. In terms of biological role, removal of H(2)O(2), oxidation of toxic reductants, biosynthesis and degradation of lignin, suberization, auxin catabolism, response to environmental stresses such as wounding, pathogen attack and oxidative stress. These functions might be dependent on each isozyme/isoform in each plant tissue. Active against p-coumaryl alcohol, coniferyl alcohol and coniferyl aldehyde. In Ginkgo biloba (Ginkgo), this protein is Peroxidase.